A 118-amino-acid polypeptide reads, in one-letter code: Putative pterin-4-alpha-carbinolamine dehydratase (118 aa).

This sequence belongs to the pterin-4-alpha-carbinolamine dehydratase family.

The catalysed reaction is (4aS,6R)-4a-hydroxy-L-erythro-5,6,7,8-tetrahydrobiopterin = (6R)-L-erythro-6,7-dihydrobiopterin + H2O. The protein is Putative pterin-4-alpha-carbinolamine dehydratase (phhB) of Xanthomonas axonopodis pv. citri (strain 306).